A 196-amino-acid chain; its full sequence is Nucleoside triphosphate pyrophosphatase (196 aa).

The active-site Proton acceptor is the Asp72.

It belongs to the Maf family. A divalent metal cation is required as a cofactor.

Its subcellular location is the cytoplasm. It carries out the reaction a ribonucleoside 5'-triphosphate + H2O = a ribonucleoside 5'-phosphate + diphosphate + H(+). It catalyses the reaction a 2'-deoxyribonucleoside 5'-triphosphate + H2O = a 2'-deoxyribonucleoside 5'-phosphate + diphosphate + H(+). Nucleoside triphosphate pyrophosphatase. May have a dual role in cell division arrest and in preventing the incorporation of modified nucleotides into cellular nucleic acids. This chain is Nucleoside triphosphate pyrophosphatase, found in Chlamydia muridarum (strain MoPn / Nigg).